The primary structure comprises 238 residues: Uridylate kinase (238 aa).

ATP is bound at residue 12-15 (KLSG). Residue glycine 54 coordinates UMP. ATP contacts are provided by glycine 55 and arginine 59. Residues aspartate 74 and 135–142 (TGNPYFTT) contribute to the UMP site. ATP is bound by residues threonine 162, tyrosine 168, and aspartate 171.

The protein belongs to the UMP kinase family. As to quaternary structure, homohexamer.

Its subcellular location is the cytoplasm. The enzyme catalyses UMP + ATP = UDP + ADP. It functions in the pathway pyrimidine metabolism; CTP biosynthesis via de novo pathway; UDP from UMP (UMPK route): step 1/1. With respect to regulation, inhibited by UTP. Catalyzes the reversible phosphorylation of UMP to UDP. In Oleidesulfovibrio alaskensis (strain ATCC BAA-1058 / DSM 17464 / G20) (Desulfovibrio alaskensis), this protein is Uridylate kinase.